Here is a 266-residue protein sequence, read N- to C-terminus: Glucose 1-dehydrogenase (266 aa).

15–39 (LVTGASQGIGEATALRFAEEGAQVA) is a binding site for NADP(+). Ser149 serves as a coordination point for substrate. The Proton acceptor role is filled by Tyr162.

Belongs to the short-chain dehydrogenases/reductases (SDR) family. As to quaternary structure, homotetramer or homooctamer.

The enzyme catalyses D-glucose + NADP(+) = D-glucono-1,5-lactone + NADPH + H(+). Oxidizes both D-glucose and D-mannose, but is 15 times more catalytically efficient with mannose. Strictly dependent on NADP. In Gluconobacter oxydans (strain 621H) (Gluconobacter suboxydans), this protein is Glucose 1-dehydrogenase.